Consider the following 395-residue polypeptide: Yellow-related salivary protein M35 (395 aa).

Positions 1–18 (MKLILTVLAFLSLQVALS) are cleaved as a signal peptide.

It belongs to the major royal jelly protein family. As to expression, salivary gland (at protein level).

The protein resides in the secreted. Functionally, probably modulates blood feeding of sand flies on vertebrate species by binding and sequestering different mediators involved in the host response. Functions as a chemoattractant for host neutrophils; likely acts through a G-protein-coupled receptor and effect is dependent on calcium influx and phosphatidylinositol 3-kinases (PI3K) activity. In terms of biological role, (Microbial infection) Probably enhances infection caused by Leishmania species in the host through augmentation of host neutrophil recruitment into the skin. In Phlebotomus duboscqi (Sandfly), this protein is Yellow-related salivary protein M35.